The chain runs to 380 residues: Succinate--CoA ligase [ADP-forming] subunit beta (380 aa).

One can recognise an ATP-grasp domain in the interval 9 to 236 (KGVFADAGIP…EAAGDELEAK (228 aa)). ATP contacts are provided by residues Lys45, 52–54 (GRG), Glu91, Val94, and Glu99. 2 residues coordinate Mg(2+): Asn191 and Asp205. Substrate-binding positions include Asn256 and 313-315 (GIT).

The protein belongs to the succinate/malate CoA ligase beta subunit family. Heterotetramer of two alpha and two beta subunits. Mg(2+) serves as cofactor.

It carries out the reaction succinate + ATP + CoA = succinyl-CoA + ADP + phosphate. The catalysed reaction is GTP + succinate + CoA = succinyl-CoA + GDP + phosphate. It functions in the pathway carbohydrate metabolism; tricarboxylic acid cycle; succinate from succinyl-CoA (ligase route): step 1/1. Functionally, succinyl-CoA synthetase functions in the citric acid cycle (TCA), coupling the hydrolysis of succinyl-CoA to the synthesis of either ATP or GTP and thus represents the only step of substrate-level phosphorylation in the TCA. The beta subunit provides nucleotide specificity of the enzyme and binds the substrate succinate, while the binding sites for coenzyme A and phosphate are found in the alpha subunit. The polypeptide is Succinate--CoA ligase [ADP-forming] subunit beta (Natronomonas pharaonis (strain ATCC 35678 / DSM 2160 / CIP 103997 / JCM 8858 / NBRC 14720 / NCIMB 2260 / Gabara) (Halobacterium pharaonis)).